A 307-amino-acid chain; its full sequence is Pseudouridine-5'-phosphate glycosidase (307 aa).

E26 (proton donor) is an active-site residue. Substrate-binding residues include K88 and V108. D140 is a binding site for Mn(2+). Position 142-144 (142-144 (SAD)) interacts with substrate. The active-site Nucleophile is the K161.

The protein belongs to the pseudouridine-5'-phosphate glycosidase family. As to quaternary structure, homotrimer. Requires Mn(2+) as cofactor.

It catalyses the reaction D-ribose 5-phosphate + uracil = psi-UMP + H2O. Its function is as follows. Catalyzes the reversible cleavage of pseudouridine 5'-phosphate (PsiMP) to ribose 5-phosphate and uracil. Functions biologically in the cleavage direction, as part of a pseudouridine degradation pathway. The sequence is that of Pseudouridine-5'-phosphate glycosidase from Clostridium botulinum (strain Langeland / NCTC 10281 / Type F).